We begin with the raw amino-acid sequence, 269 residues long: 4-hydroxy-tetrahydrodipicolinate reductase (269 aa).

NAD(+) contacts are provided by residues 10-15 (GSSGRM) and glutamate 36. Arginine 37 lines the NADP(+) pocket. Residues 99–101 (GTT) and 123–126 (APNM) each bind NAD(+). Residue histidine 156 is the Proton donor/acceptor of the active site. Residue histidine 157 participates in (S)-2,3,4,5-tetrahydrodipicolinate binding. Lysine 160 functions as the Proton donor in the catalytic mechanism. (S)-2,3,4,5-tetrahydrodipicolinate is bound at residue 166-167 (GT).

This sequence belongs to the DapB family.

It is found in the cytoplasm. The enzyme catalyses (S)-2,3,4,5-tetrahydrodipicolinate + NAD(+) + H2O = (2S,4S)-4-hydroxy-2,3,4,5-tetrahydrodipicolinate + NADH + H(+). It carries out the reaction (S)-2,3,4,5-tetrahydrodipicolinate + NADP(+) + H2O = (2S,4S)-4-hydroxy-2,3,4,5-tetrahydrodipicolinate + NADPH + H(+). It functions in the pathway amino-acid biosynthesis; L-lysine biosynthesis via DAP pathway; (S)-tetrahydrodipicolinate from L-aspartate: step 4/4. Catalyzes the conversion of 4-hydroxy-tetrahydrodipicolinate (HTPA) to tetrahydrodipicolinate. The chain is 4-hydroxy-tetrahydrodipicolinate reductase from Nitrosospira multiformis (strain ATCC 25196 / NCIMB 11849 / C 71).